Reading from the N-terminus, the 262-residue chain is Indole-3-glycerol phosphate synthase (262 aa).

The protein belongs to the TrpC family.

The enzyme catalyses 1-(2-carboxyphenylamino)-1-deoxy-D-ribulose 5-phosphate + H(+) = (1S,2R)-1-C-(indol-3-yl)glycerol 3-phosphate + CO2 + H2O. It participates in amino-acid biosynthesis; L-tryptophan biosynthesis; L-tryptophan from chorismate: step 4/5. The polypeptide is Indole-3-glycerol phosphate synthase (Leuconostoc mesenteroides subsp. mesenteroides (strain ATCC 8293 / DSM 20343 / BCRC 11652 / CCM 1803 / JCM 6124 / NCDO 523 / NBRC 100496 / NCIMB 8023 / NCTC 12954 / NRRL B-1118 / 37Y)).